The chain runs to 685 residues: Polyphosphate kinase (685 aa).

Asn45 is a binding site for ATP. Residues Arg372 and Arg402 each coordinate Mg(2+). The region spanning Pro427–Thr461 is the PLD phosphodiesterase 1 domain. His432 (phosphohistidine intermediate) is an active-site residue. Residues Tyr465, Arg561, and His589 each coordinate ATP. The PLD phosphodiesterase 2 domain occupies Asp584–Asn614.

This sequence belongs to the polyphosphate kinase 1 (PPK1) family. It depends on Mg(2+) as a cofactor. Post-translationally, an intermediate of this reaction is the autophosphorylated ppk in which a phosphate is covalently linked to a histidine residue through a N-P bond.

The enzyme catalyses [phosphate](n) + ATP = [phosphate](n+1) + ADP. Catalyzes the reversible transfer of the terminal phosphate of ATP to form a long-chain polyphosphate (polyP). This chain is Polyphosphate kinase, found in Klebsiella pneumoniae.